Here is a 394-residue protein sequence, read N- to C-terminus: GDNF family receptor alpha-like (394 aa).

An N-terminal signal peptide occupies residues 1–19 (MLVFIFLAVRLSSENESSS). Residues 20 to 350 (QTNDCAYFMR…LTGFNSPFSG (331 aa)) are Extracellular-facing. 3 N-linked (GlcNAc...) asparagine glycosylation sites follow: N65, N101, and N115. Cystine bridges form between C132/C190, C139/C145, C156/C168, C163/C211, C192/C199, C221/C292, C228/C234, C245/C276, C253/C259, C270/C317, and C294/C305. The segment at 150–229 (ALYLKACTAN…TCLSVIHTCR (80 aa)) is required for interaction with GDF15. The helical transmembrane segment at 351–371 (ELIYVVVCMVVTSGILSLVML) threads the bilayer. Topologically, residues 372-394 (KLRIPSKKRDPAPIEIAGAVIIQ) are cytoplasmic.

Belongs to the GDNFR family. Interacts (via the extracellular domain) with GDF15 and RET; receptor of GDF15, mediates cellular signaling through interaction with RET after GDF15-binding. Interaction with RET requires previous GDF15-binding. In terms of processing, cleaved and inactivated by MMP14, inhibiting the GDF15-GFRAL aversive response. As to expression, expressed in the brainstem, restricted to cells in the area postrema and the immediately adjacent region of the nucleus tractus solitarius. Detected at low levels in testis.

The protein localises to the cell membrane. Functionally, brainstem-restricted receptor for GDF15 hormone, which triggers an aversive response, characterized by nausea, vomiting, and/or loss of appetite in response to various stresses. The aversive response is both required to reduce continuing exposure to those stresses at the time of exposure and to promote avoidance behavior in the future. The GDF15-GFRAL aversive response is triggered by stresses, such as anticancer drugs (camptothecin or cisplatin), cancers or drugs such as metformin. Upon interaction with its ligand, GDF15, mediates the GDF15-induced autophosphorylation and activation of the RET tyrosine kinase receptor, leading to activation of MAPK- and AKT- signaling pathways. Ligand-binding activates GFRAL-expressing neurons localized in the area postrema and nucleus tractus solitarius of the brainstem. The GDF15-GFRAL signal induces expression of genes involved in metabolism, such as lipid metabolism in adipose tissues. This chain is GDNF family receptor alpha-like, found in Rattus norvegicus (Rat).